We begin with the raw amino-acid sequence, 344 residues long: Methionine aminopeptidase 1C, chloroplastic/mitochondrial (344 aa).

H172 serves as a coordination point for substrate. A divalent metal cation is bound by residues D189, D200, and H262. H269 contributes to the substrate binding site. Residues E296 and E327 each coordinate a divalent metal cation.

The protein belongs to the peptidase M24A family. Methionine aminopeptidase type 1 subfamily. Co(2+) is required as a cofactor. The cofactor is Zn(2+). Requires Mn(2+) as cofactor. Fe(2+) serves as cofactor. As to expression, ubiquitous.

It is found in the plastid. The protein localises to the chloroplast. It localises to the mitochondrion. The enzyme catalyses Release of N-terminal amino acids, preferentially methionine, from peptides and arylamides.. Removes the N-terminal methionine from nascent proteins. The N-terminal methionine is often cleaved when the second residue in the primary sequence is small and uncharged (Met-Ala-, Cys, Gly, Pro, Ser, Thr, or Val). This is Methionine aminopeptidase 1C, chloroplastic/mitochondrial (MAP1C) from Arabidopsis thaliana (Mouse-ear cress).